We begin with the raw amino-acid sequence, 359 residues long: DNA replication and repair protein RecF (359 aa).

30–37 contacts ATP; the sequence is GPNGSGKT.

It belongs to the RecF family.

Its subcellular location is the cytoplasm. Functionally, the RecF protein is involved in DNA metabolism; it is required for DNA replication and normal SOS inducibility. RecF binds preferentially to single-stranded, linear DNA. It also seems to bind ATP. This is DNA replication and repair protein RecF from Vibrio parahaemolyticus serotype O3:K6 (strain RIMD 2210633).